A 428-amino-acid chain; its full sequence is Dihydrolipoyllysine-residue acetyltransferase component of pyruvate dehydrogenase complex (428 aa).

The region spanning 2–77 is the Lipoyl-binding domain; it reads AFEFKLPDIG…TVGQTLITLD (76 aa). N6-lipoyllysine is present on lysine 43. The interval 88–123 is disordered; that stretch reads GQEQEEAKKEEKTETVSKEEKVDAVAPNAPAAEAEA. The span at 89–110 shows a compositional bias: basic and acidic residues; sequence QEQEEAKKEEKTETVSKEEKVD. Positions 111–123 are enriched in low complexity; the sequence is AVAPNAPAAEAEA. The Peripheral subunit-binding (PSBD) domain maps to 130 to 167; the sequence is IAMPSVRKYAREKGVDIRLVQGTGKNGRVLKEDIDAFL. A compositionally biased stretch (low complexity) spans 177–194; it reads AAEEKAAPAAAKPATTEG. Residues 177–201 form a disordered region; it reads AAEEKAAPAAAKPATTEGEFPETRE. Histidine 399 is an active-site residue.

This sequence belongs to the 2-oxoacid dehydrogenase family. Forms a 60-polypeptide structural core with icosahedral symmetry. Requires (R)-lipoate as cofactor.

It carries out the reaction N(6)-[(R)-dihydrolipoyl]-L-lysyl-[protein] + acetyl-CoA = N(6)-[(R)-S(8)-acetyldihydrolipoyl]-L-lysyl-[protein] + CoA. In terms of biological role, the pyruvate dehydrogenase complex catalyzes the overall conversion of pyruvate to acetyl-CoA and CO(2). It contains multiple copies of three enzymatic components: pyruvate dehydrogenase (E1), dihydrolipoamide acetyltransferase (E2) and lipoamide dehydrogenase (E3). The protein is Dihydrolipoyllysine-residue acetyltransferase component of pyruvate dehydrogenase complex (pdhC) of Geobacillus stearothermophilus (Bacillus stearothermophilus).